The chain runs to 262 residues: Hydroxyethylthiazole kinase (262 aa).

Met-50 lines the substrate pocket. Arg-125 and Thr-171 together coordinate ATP. Gly-198 lines the substrate pocket.

This sequence belongs to the Thz kinase family. It depends on Mg(2+) as a cofactor.

It carries out the reaction 5-(2-hydroxyethyl)-4-methylthiazole + ATP = 4-methyl-5-(2-phosphooxyethyl)-thiazole + ADP + H(+). It functions in the pathway cofactor biosynthesis; thiamine diphosphate biosynthesis; 4-methyl-5-(2-phosphoethyl)-thiazole from 5-(2-hydroxyethyl)-4-methylthiazole: step 1/1. Catalyzes the phosphorylation of the hydroxyl group of 4-methyl-5-beta-hydroxyethylthiazole (THZ). The chain is Hydroxyethylthiazole kinase from Escherichia coli O6:K15:H31 (strain 536 / UPEC).